The chain runs to 181 residues: Transcription termination/antitermination protein NusG (181 aa).

Positions 130–158 constitute a KOW domain; that stretch reads PGETVRVNDGPFSDFNGIVEEVDYEKNRL.

The protein belongs to the NusG family. In terms of assembly, monomer. Interacts with the transcription termination factor Rho and with RNA polymerase.

In terms of biological role, participates in transcription elongation, termination and antitermination. In the absence of Rho, increases the rate of transcription elongation by the RNA polymerase (RNAP), probably by partially suppressing pausing. In the presence of Rho, modulates most Rho-dependent termination events by interacting with the RNAP to render the complex more susceptible to the termination activity of Rho. May be required to overcome a kinetic limitation of Rho to function at certain terminators. Also involved in ribosomal RNA transcriptional antitermination. This Buchnera aphidicola subsp. Baizongia pistaciae (strain Bp) protein is Transcription termination/antitermination protein NusG.